A 130-amino-acid polypeptide reads, in one-letter code: YopE regulator (130 aa).

Positive regulator of YopE. This is YopE regulator (yerA) from Yersinia pestis.